A 66-amino-acid chain; its full sequence is Beta-toxin Chui2 (66 aa).

Residues 1–66 (KEGYIVNSYT…VWPLKNKTCN (66 aa)) enclose the LCN-type CS-alpha/beta domain. 4 cysteine pairs are disulfide-bonded: C12–C65, C16–C41, C25–C46, and C29–C48. At N66 the chain carries Asparagine amide.

It belongs to the long (4 C-C) scorpion toxin superfamily. Sodium channel inhibitor family. Beta subfamily. As to expression, expressed by the venom gland.

The protein localises to the secreted. Its function is as follows. Beta toxins bind voltage-independently at site-4 of sodium channels (Nav) and shift the voltage of activation toward more negative potentials thereby affecting sodium channel activation and promoting spontaneous and repetitive firing. The polypeptide is Beta-toxin Chui2 (Centruroides huichol (Scorpion)).